The following is a 178-amino-acid chain: ATP synthase subunit delta (178 aa).

This sequence belongs to the ATPase delta chain family. In terms of assembly, F-type ATPases have 2 components, F(1) - the catalytic core - and F(0) - the membrane proton channel. F(1) has five subunits: alpha(3), beta(3), gamma(1), delta(1), epsilon(1). F(0) has three main subunits: a(1), b(2) and c(10-14). The alpha and beta chains form an alternating ring which encloses part of the gamma chain. F(1) is attached to F(0) by a central stalk formed by the gamma and epsilon chains, while a peripheral stalk is formed by the delta and b chains.

It is found in the cell inner membrane. Functionally, f(1)F(0) ATP synthase produces ATP from ADP in the presence of a proton or sodium gradient. F-type ATPases consist of two structural domains, F(1) containing the extramembraneous catalytic core and F(0) containing the membrane proton channel, linked together by a central stalk and a peripheral stalk. During catalysis, ATP synthesis in the catalytic domain of F(1) is coupled via a rotary mechanism of the central stalk subunits to proton translocation. This protein is part of the stalk that links CF(0) to CF(1). It either transmits conformational changes from CF(0) to CF(1) or is implicated in proton conduction. This is ATP synthase subunit delta from Chromohalobacter salexigens (strain ATCC BAA-138 / DSM 3043 / CIP 106854 / NCIMB 13768 / 1H11).